A 161-amino-acid chain; its full sequence is DNA-binding protein inhibitor ID-4 (161 aa).

Residues alanine 52–leucine 104 enclose the bHLH domain.

As to quaternary structure, heterodimer with other HLH proteins.

It localises to the nucleus. Transcriptional regulator (lacking a basic DNA binding domain) which negatively regulates the basic helix-loop-helix (bHLH) transcription factors by forming heterodimers and inhibiting their DNA binding and transcriptional activity. Implicated in regulating a variety of cellular processes, including cellular growth, senescence, differentiation, apoptosis, angiogenesis, and neoplastic transformation. This chain is DNA-binding protein inhibitor ID-4 (Id4), found in Mus musculus (Mouse).